A 428-amino-acid chain; its full sequence is C4-dicarboxylate transport protein 1 (428 aa).

8 helical membrane-spanning segments follow: residues 5 to 27 (FYKI…GHFE), 42 to 64 (IQLI…IAGM), 77 to 99 (ALLY…GHIF), 150 to 167 (ILQI…LSAM), 188 to 210 (IVHV…TIGK), 225 to 247 (TFYL…LTGF), 314 to 336 (IFIS…LAVA), and 351 to 373 (FITL…VLIL).

Belongs to the dicarboxylate/amino acid:cation symporter (DAACS) (TC 2.A.23) family.

It localises to the cell inner membrane. Functionally, responsible for the transport of dicarboxylates such as succinate, fumarate, and malate from the periplasm across the membrane. This chain is C4-dicarboxylate transport protein 1 (dctA1), found in Ralstonia nicotianae (strain ATCC BAA-1114 / GMI1000) (Ralstonia solanacearum).